Here is a 1643-residue protein sequence, read N- to C-terminus: RNA replication protein (1643 aa).

In terms of domain architecture, Alphavirus-like MT spans 59-224; that stretch reads NPYANQTHTH…FHPYTTLEWL (166 aa). The disordered stretch occupies residues 686–711; the sequence is RPTASRKSCQPTPSVDKSGADSPPEK. The span at 690-700 shows a compositional bias: polar residues; it reads SRKSCQPTPSV. The 169-residue stretch at 828–996 folds into the (+)RNA virus helicase ATP-binding domain; the sequence is SDIKNNRTGK…IFSPYCEFYL (169 aa). 868–875 lines the ATP pocket; it reads GCGGSGKS. The region spanning 997–1132 is the (+)RNA virus helicase C-terminal domain; the sequence is NATHRNVKDL…TYRDEKTEVY (136 aa). The segment at 1131 to 1155 is disordered; the sequence is VYNSQPASAEPTEPEAPATHFPTAP. Residues 1136–1155 are compositionally biased toward low complexity; sequence PASAEPTEPEAPATHFPTAP. The RdRp catalytic domain maps to 1372-1479; it reads RPAHTNDFTA…DRVSIEKDSF (108 aa). The interval 1587–1620 is disordered; that stretch reads GSASPPHVFEKTADANTAGSSKTHKRNALKKKKQ. Basic residues predominate over residues 1608–1620; the sequence is KTHKRNALKKKKQ.

Belongs to the potexvirus/carlavirus RNA replication protein family.

The catalysed reaction is RNA(n) + a ribonucleoside 5'-triphosphate = RNA(n+1) + diphosphate. It catalyses the reaction ATP + H2O = ADP + phosphate + H(+). RNA replication. The central part of this protein possibly functions as an ATP-binding helicase. This chain is RNA replication protein, found in Narcissus pseudonarcissus (Daffodil).